The chain runs to 179 residues: MAVFKTTLWWLISGTLGIICLSLTATLGILLKNSFTKLSIEPAFTPGPDIELQKDSDCCSCQEKWVGYRCNCYFISSEQKTWNESRHLCASQKSSLLQLQNTDELDFMSSSQQFYWIGLSYSEEHTAWLWENGSALSQYLFPLFETFNPKNCIAYNPNGNALDESCEDKNRYICKQQLI.

Residues 1–10 lie on the Cytoplasmic side of the membrane; sequence MAVFKTTLWW. The helical; Signal-anchor for type II membrane protein transmembrane segment at 11-31 threads the bilayer; that stretch reads LISGTLGIICLSLTATLGILL. The Extracellular portion of the chain corresponds to 32 to 179; sequence KNSFTKLSIE…NRYICKQQLI (148 aa). 2 cysteine pairs are disulfide-bonded: cysteine 58-cysteine 70 and cysteine 61-cysteine 72. Residues 68–175 enclose the C-type lectin domain; that stretch reads YRCNCYFISS…CEDKNRYICK (108 aa). N-linked (GlcNAc...) asparagine glycosylation is found at asparagine 83 and asparagine 132. Disulfide bonds link cysteine 89/cysteine 174 and cysteine 152/cysteine 166.

As to quaternary structure, can form disulfide-bonded heterodimer with NKG2 family members KLRC1 and KLRC2. KLRD1-KLRC1 heterodimer interacts with peptide-bound MHC-E-B2M heterotrimeric complex. KLRD1 plays a prominent role in directly interacting with MHC-E. KLRD1-KLRC1 interacts with much higher affinity with peptide-bound MHC-E-B2M than KLRD1-KLRC2. Interacts with the adapter protein TYROBP/DAP12; this interaction is required for cell surface expression and cell activation. In terms of tissue distribution, natural killer cells.

It localises to the cell membrane. Immune receptor involved in self-nonself discrimination. In complex with KLRC1 or KLRC2 on cytotoxic and regulatory lymphocyte subsets, recognizes non-classical major histocompatibility (MHC) class Ib molecule MHC-E loaded with self-peptides derived from the signal sequence of classical MHC class Ia and non-classical MHC class Ib molecules. Enables cytotoxic cells to monitor the expression of MHC class I molecules in healthy cells and to tolerate self. Primarily functions as a ligand binding subunit as it lacks the capacity to signal. Functionally, KLRD1-KLRC1 acts as an immune inhibitory receptor. Key inhibitory receptor on natural killer (NK) cells that regulates their activation and effector functions. Dominantly counteracts T cell receptor signaling on a subset of memory/effector CD8-positive T cells as part of an antigen-driven response to avoid autoimmunity. On intraepithelial CD8-positive gamma-delta regulatory T cells triggers TGFB1 secretion, which in turn limits the cytotoxic programming of intraepithelial CD8-positive alpha-beta T cells, distinguishing harmless from pathogenic antigens. In MHC-E-rich tumor microenvironment, acts as an immune inhibitory checkpoint and may contribute to progressive loss of effector functions of NK cells and tumor-specific T cells, a state known as cell exhaustion. Upon MHC-E-peptide binding, transmits intracellular signals through KLRC1 immunoreceptor tyrosine-based inhibition motifs (ITIMs) by recruiting INPP5D/SHIP-1 and INPPL1/SHIP-2 tyrosine phosphatases to ITIMs, and ultimately opposing signals transmitted by activating receptors through dephosphorylation of proximal signaling molecules. Its function is as follows. KLRD1-KLRC2 acts as an immune activating receptor. On cytotoxic lymphocyte subsets recognizes MHC-E loaded with signal sequence-derived peptides from non-classical MHC class Ib MHC-G molecules, likely playing a role in the generation and effector functions of adaptive NK cells and in maternal-fetal tolerance during pregnancy. Regulates the effector functions of terminally differentiated cytotoxic lymphocyte subsets, and in particular may play a role in adaptive NK cell response to viral infection. Upon MHC-E-peptide binding, transmits intracellular signals via the adapter protein TYROBP/DAP12, triggering the phosphorylation of proximal signaling molecules and cell activation. The sequence is that of Natural killer cells antigen CD94 (KLRD1) from Pongo pygmaeus (Bornean orangutan).